Consider the following 360-residue polypeptide: 3-dehydroquinate synthase (360 aa).

NAD(+) is bound by residues 70–75, 128–129, Lys141, and Lys150; these read DGESLK and TT. The Zn(2+) site is built by Glu182, His243, and His259.

This sequence belongs to the sugar phosphate cyclases superfamily. Dehydroquinate synthase family. Requires NAD(+) as cofactor. It depends on Co(2+) as a cofactor. Zn(2+) is required as a cofactor.

The protein localises to the cytoplasm. The catalysed reaction is 7-phospho-2-dehydro-3-deoxy-D-arabino-heptonate = 3-dehydroquinate + phosphate. It functions in the pathway metabolic intermediate biosynthesis; chorismate biosynthesis; chorismate from D-erythrose 4-phosphate and phosphoenolpyruvate: step 2/7. In terms of biological role, catalyzes the conversion of 3-deoxy-D-arabino-heptulosonate 7-phosphate (DAHP) to dehydroquinate (DHQ). In Thermoplasma volcanium (strain ATCC 51530 / DSM 4299 / JCM 9571 / NBRC 15438 / GSS1), this protein is 3-dehydroquinate synthase.